Consider the following 367-residue polypeptide: Pantothenate kinase CAB1 (367 aa).

This sequence belongs to the type II pantothenate kinase family.

The protein localises to the cytoplasm. It is found in the nucleus. It catalyses the reaction (R)-pantothenate + ATP = (R)-4'-phosphopantothenate + ADP + H(+). It functions in the pathway cofactor biosynthesis; coenzyme A biosynthesis; CoA from (R)-pantothenate: step 1/5. With respect to regulation, regulated by feedback inhibition by malonyl-CoA. In terms of biological role, plays a role in the physiological regulation of the intracellular CoA concentration. This is Pantothenate kinase CAB1 (CAB1) from Saccharomyces cerevisiae (strain ATCC 204508 / S288c) (Baker's yeast).